The sequence spans 521 residues: Glutamyl-tRNA(Gln) amidotransferase subunit A (521 aa).

Active-site charge relay system residues include Lys79 and Ser187. Catalysis depends on Ser211, which acts as the Acyl-ester intermediate.

It belongs to the amidase family. GatA subfamily. In terms of assembly, heterotrimer of A, B and C subunits.

It carries out the reaction L-glutamyl-tRNA(Gln) + L-glutamine + ATP + H2O = L-glutaminyl-tRNA(Gln) + L-glutamate + ADP + phosphate + H(+). In terms of biological role, allows the formation of correctly charged Gln-tRNA(Gln) through the transamidation of misacylated Glu-tRNA(Gln) in organisms which lack glutaminyl-tRNA synthetase. The reaction takes place in the presence of glutamine and ATP through an activated gamma-phospho-Glu-tRNA(Gln). In Mesorhizobium japonicum (strain LMG 29417 / CECT 9101 / MAFF 303099) (Mesorhizobium loti (strain MAFF 303099)), this protein is Glutamyl-tRNA(Gln) amidotransferase subunit A.